Consider the following 715-residue polypeptide: Forkhead box protein P2 (715 aa).

A compositionally biased stretch (polar residues) spans 1–28; sequence MMQESATETISNSSMNQNGMSTLSSQLD. Disordered regions lie at residues 1 to 46 and 281 to 339; these read MMQE…EVST and DNGI…TGAS. Over residues 292–305 the composition is skewed to low complexity; sequence TTNNSSSTTSSNTS. Over residues 326–337 the composition is skewed to basic and acidic residues; sequence ARRDSSSHEETG. The C2H2-type zinc-finger motif lies at 346–371; that stretch reads GVCKWPGCESICEDFGQFLKHLNNEH. A leucine-zipper region spans residues 388–409; sequence VQQLEIQLSKERERLQAMMTHL. The segment at 422–426 is CTBP1-binding; the sequence is PLNLV. The segment covering 438–459 has biased composition (low complexity); it reads TSPQSLPQTPTTPTAPVTPITQ. Residues 438-465 are disordered; sequence TSPQSLPQTPTTPTAPVTPITQGPSVIT. The fork-head DNA-binding region spans 504–594; sequence RPPFTYATLI…SQKITGSPTL (91 aa). Disordered stretches follow at residues 649–668 and 678–715; these read LDHI…QPHI and VIAE…EDLE. Over residues 699–715 the composition is skewed to acidic residues; the sequence is LEDDREIEEEPLSEDLE.

Forms homodimers and heterodimers with FOXP1 and FOXP4. Dimerization is required for DNA-binding. Interacts with CTBP1. Interacts with FOXP1. Isoform 1 and isoform 3 interact with TBR1. Interacts with ZMYM2. As to expression, isoform 1 and isoform 6 are expressed in adult and fetal brain, caudate nucleus and lung.

The protein localises to the nucleus. Transcriptional repressor that may play a role in the specification and differentiation of lung epithelium. May also play a role in developing neural, gastrointestinal and cardiovascular tissues. Can act with CTBP1 to synergistically repress transcription but CTPBP1 is not essential. Plays a role in synapse formation by regulating SRPX2 levels. Involved in neural mechanisms mediating the development of speech and language. This chain is Forkhead box protein P2 (FOXP2), found in Homo sapiens (Human).